A 197-amino-acid chain; its full sequence is TLE family member 5 (197 aa).

The segment at 166–197 (LSALGSQAHLSKEDKNGHDGDTHQEDDGEKSD) is CCN domain. Residues 174–197 (HLSKEDKNGHDGDTHQEDDGEKSD) are disordered. A compositionally biased stretch (basic and acidic residues) spans 175-197 (LSKEDKNGHDGDTHQEDDGEKSD). Ser-196 carries the phosphoserine modification.

Belongs to the WD repeat Groucho/TLE family. In terms of assembly, homooligomer and heterooligomer with other family members. Binds TCF7. Binds the NF-kappa-B subunit RELA. Interacts with PHF12. Interacts (via Q domain) with SIX3. Interacts with SIX6. Ubiquitinated by XIAP/BIRC4. Found predominantly in muscle, heart and Placenta. In fetal tissues, abundantly expressed in the heart, lung, kidney, brain and liver.

Its subcellular location is the nucleus. Transcriptional corepressor. Acts as a dominant repressor towards other family members. Inhibits NF-kappa-B-regulated gene expression. May be required for the initiation and maintenance of the differentiated state. Essential for the transcriptional repressor activity of SIX3 during retina and lens development. In Homo sapiens (Human), this protein is TLE family member 5.